Consider the following 190-residue polypeptide: Coat protein (190 aa).

It belongs to the potexvirus capsid protein family.

It is found in the virion. Its function is as follows. Required for genome encapsidation. Forms ribonucleoprotein complexes along with TGB1 helicase and viral RNA. The protein is Coat protein of White clover mosaic virus (strain M) (WCMV).